The sequence spans 129 residues: Glycine cleavage system H protein (129 aa).

The region spanning 24–106 (TYTVGITEHA…YTGGWIFKIK (83 aa)) is the Lipoyl-binding domain. The residue at position 65 (lysine 65) is an N6-lipoyllysine.

The protein belongs to the GcvH family. The glycine cleavage system is composed of four proteins: P, T, L and H. The cofactor is (R)-lipoate.

Functionally, the glycine cleavage system catalyzes the degradation of glycine. The H protein shuttles the methylamine group of glycine from the P protein to the T protein. In Salmonella choleraesuis (strain SC-B67), this protein is Glycine cleavage system H protein.